Consider the following 411-residue polypeptide: Argininosuccinate synthase (411 aa).

ATP is bound by residues 10–18 (AYSGGLDTS) and Ala37. The L-citrulline site is built by Tyr89 and Ser94. Position 119 (Gly119) interacts with ATP. Thr121, Asn125, and Asp126 together coordinate L-aspartate. An L-citrulline-binding site is contributed by Asn125. The L-citrulline site is built by Arg129, Ser178, Ser187, Glu263, and Tyr275.

Belongs to the argininosuccinate synthase family. Type 1 subfamily. In terms of assembly, homotetramer.

Its subcellular location is the cytoplasm. The catalysed reaction is L-citrulline + L-aspartate + ATP = 2-(N(omega)-L-arginino)succinate + AMP + diphosphate + H(+). It participates in amino-acid biosynthesis; L-arginine biosynthesis; L-arginine from L-ornithine and carbamoyl phosphate: step 2/3. In Aeromonas salmonicida (strain A449), this protein is Argininosuccinate synthase.